Consider the following 146-residue polypeptide: UPF0178 protein BCE33L2782 (146 aa).

Belongs to the UPF0178 family.

This is UPF0178 protein BCE33L2782 from Bacillus cereus (strain ZK / E33L).